Consider the following 643-residue polypeptide: 1-deoxy-D-xylulose-5-phosphate synthase (643 aa).

Residues histidine 72 and 113-115 (GHA) contribute to the thiamine diphosphate site. Aspartate 144 provides a ligand contact to Mg(2+). Residues 145-146 (GA), asparagine 174, tyrosine 287, and glutamate 370 contribute to the thiamine diphosphate site. Residue asparagine 174 participates in Mg(2+) binding.

It belongs to the transketolase family. DXPS subfamily. As to quaternary structure, homodimer. Requires Mg(2+) as cofactor. Thiamine diphosphate is required as a cofactor.

The enzyme catalyses D-glyceraldehyde 3-phosphate + pyruvate + H(+) = 1-deoxy-D-xylulose 5-phosphate + CO2. The protein operates within metabolic intermediate biosynthesis; 1-deoxy-D-xylulose 5-phosphate biosynthesis; 1-deoxy-D-xylulose 5-phosphate from D-glyceraldehyde 3-phosphate and pyruvate: step 1/1. In terms of biological role, catalyzes the acyloin condensation reaction between C atoms 2 and 3 of pyruvate and glyceraldehyde 3-phosphate to yield 1-deoxy-D-xylulose-5-phosphate (DXP). The chain is 1-deoxy-D-xylulose-5-phosphate synthase from Prochlorococcus marinus (strain MIT 9211).